We begin with the raw amino-acid sequence, 1348 residues long: Kinesin-like protein KIF7 (1348 aa).

Residues 15–349 (PVRVALRVRP…LNYASRAQNI (335 aa)) enclose the Kinesin motor domain. 94–101 (GQTGSGKT) is an ATP binding site. The tract at residues 358–479 (HPEAERVPEE…EDQAAQGTSG (122 aa)) is interaction with DLG5. Residues 358–1211 (HPEAERVPEE…LGRHMWINQE (854 aa)) form an interaction with SMO region. Disordered regions lie at residues 451 to 486 (RSTLSSASGPDSGIESAPAEDQAAQGTSGRKGDEGT) and 607 to 674 (AQAD…VCPE). Residues 480–542 (RKGDEGTQQL…ELRLRLELAQ (63 aa)) adopt a coiled-coil conformation. The span at 620-636 (SEEEGEEEEEEEEEEEE) shows a compositional bias: acidic residues. Coiled coils occupy residues 698-1057 (APAA…IEAL) and 1109-1211 (FDKV…INQE). Ser-903 is subject to Phosphoserine. Disordered stretches follow at residues 1288 to 1314 (LCSEQGSSEESRVRETTEPPVGRVLPM) and 1328 to 1348 (KPRWEPRRTSPGMIDVRKNPL).

It belongs to the TRAFAC class myosin-kinesin ATPase superfamily. Kinesin family. Can form homodimers and interacts with microtubules. Interacts with GLI1 and SMO. Interacts with GLI2, GLI3 and SUFU. Interacts with NPHP1. Interacts with SMO and DLG5 (via PDZ4 or guanylate kinase-like domain). Post-translationally, polyubiquitinated by UBR3. As to expression, expressed in heart, lung, liver, kidney, testis, spleen and cerebellum.

It localises to the cell projection. It is found in the cilium. The protein resides in the cytoplasm. Its subcellular location is the cytoskeleton. The protein localises to the cilium basal body. Functionally, essential for hedgehog signaling regulation: acts both as a negative and a positive regulator of sonic hedgehog (Shh) and Indian hedgehog (Ihh) pathways, acting downstream of SMO, through both SUFU-dependent and -independent mechanisms. Involved in the regulation of microtubular dynamics. Required for proper organization of the ciliary tip and control of ciliary localization of SUFU-GLI2 complexes. Required for localization of GLI3 to cilia in response to Shh. Negatively regulates Shh signaling by preventing inappropriate activation of the transcriptional activator GLI2 in the absence of ligand. Positively regulates Shh signaling by preventing the processing of the transcription factor GLI3 into its repressor form. In keratinocytes, promotes the dissociation of SUFU-GLI2 complexes, GLI2 nuclear translocation and Shh signaling activation. Involved in the regulation of epidermal differentiation and chondrocyte development. The sequence is that of Kinesin-like protein KIF7 (Kif7) from Mus musculus (Mouse).